A 329-amino-acid chain; its full sequence is Endo-beta-N-acetylglucosaminidase F3 (329 aa).

Positions 1 to 39 form a signal peptide, or 40, or 41; sequence MKKIFFAQCSILLLMLGSCSKMTEDMTPESVNKEASVKS. One can recognise a GH18 domain in the interval 48–329; sequence GVCIAYYITD…ANAVRDAVKN (282 aa). Residue threonine 88 is glycosylated (O-linked (Man...) threonine). Residue glutamate 167 is the Proton donor of the active site.

It belongs to the glycosyl hydrolase 18 family. Monomer. Post-translationally, carbohydrate at Thr-88 consists of (2-OMe)Man1-4GlcNAcU1-4GlcU1-4Glc1-4(2-OMe)GlcU1-4[(2-OMe)Rham1-2]Man.

It localises to the secreted. It catalyses the reaction an N(4)-(oligosaccharide-(1-&gt;3)-[oligosaccharide-(1-&gt;6)]-beta-D-Man-(1-&gt;4)-beta-D-GlcNAc-(1-&gt;4)-alpha-D-GlcNAc)-L-asparaginyl-[protein] + H2O = an oligosaccharide-(1-&gt;3)-[oligosaccharide-(1-&gt;6)]-beta-D-Man-(1-&gt;4)-D-GlcNAc + N(4)-(N-acetyl-beta-D-glucosaminyl)-L-asparaginyl-[protein]. In terms of biological role, endohydrolysis of the di-N-acetylchitobiosyl unit in high-mannose glycopeptides and glycoproteins. Hydrolyzes bi- and triantennary glycans. The presence of a core-bound fucose greatly augments endo F3 activity on biantennary and, presumably, triantennary oligosaccharides. The protein is Endo-beta-N-acetylglucosaminidase F3 (endOF3) of Elizabethkingia meningoseptica (Chryseobacterium meningosepticum).